The sequence spans 96 residues: Phosphoribosyl-ATP pyrophosphatase (96 aa).

This sequence belongs to the PRA-PH family.

It is found in the cytoplasm. The enzyme catalyses 1-(5-phospho-beta-D-ribosyl)-ATP + H2O = 1-(5-phospho-beta-D-ribosyl)-5'-AMP + diphosphate + H(+). It participates in amino-acid biosynthesis; L-histidine biosynthesis; L-histidine from 5-phospho-alpha-D-ribose 1-diphosphate: step 2/9. The chain is Phosphoribosyl-ATP pyrophosphatase from Methanococcus vannielii (strain ATCC 35089 / DSM 1224 / JCM 13029 / OCM 148 / SB).